A 409-amino-acid chain; its full sequence is Lissencephaly-1 homolog (409 aa).

Residues 7–39 (QKEELNKAIADYLHQCGFEDTLNAFKQDANMPG) form the LisH domain. A coiled-coil region spans residues 54–80 (TSVIRLQKKVMDLETRLSEAEKEVHHG). The interval 72–95 (EAEKEVHHGGGPKKTRSPEDWIPR) is disordered. WD repeat units follow at residues 104-145 (GHRS…RTLK), 146-187 (GHTD…RTLH), 188-229 (GHDH…KTFQ), 231-269 (HGEWVRRVRPNADGSLIASCSNDQTIRVWVVASRECKCD), 272-332 (DHDH…CLVT), 335-374 (GHDNWVRAVMFHPGGKFIVSCSDDKTLRIWDYKNKRCAKT), and 377-409 (AHEHFVTTLDFHKSAPFVATGSVDLTLKVWECR).

It belongs to the WD repeat LIS1/nudF family.

It localises to the cytoplasm. Its subcellular location is the cytoskeleton. The protein resides in the microtubule organizing center. The protein localises to the centrosome. Positively regulates the activity of the minus-end directed microtubule motor protein dynein. May enhance dynein-mediated microtubule sliding by targeting dynein to the microtubule plus end. Required for several dynein- and microtubule-dependent processes. The sequence is that of Lissencephaly-1 homolog from Nematostella vectensis (Starlet sea anemone).